The primary structure comprises 27 residues: Cupiennin-3b (27 aa).

A Glutamic acid 1-amide modification is found at E27.

As to expression, expressed by the venom gland.

The protein resides in the secreted. This is Cupiennin-3b from Cupiennius salei (American wandering spider).